The sequence spans 61 residues: Cytotoxin 2 (61 aa).

Disulfide bonds link cysteine 3–cysteine 22, cysteine 15–cysteine 39, cysteine 43–cysteine 54, and cysteine 55–cysteine 60.

It belongs to the three-finger toxin family. Short-chain subfamily. Type IB cytotoxin sub-subfamily. As to expression, expressed by the venom gland.

The protein localises to the secreted. This protein lyses red blood cells, has cytotoxic activity and induces hypotension, but is not neurotoxic. In addition, it induces direct paralysis of the muscle fiber. This is Cytotoxin 2 from Hemachatus haemachatus (Rinkhals).